The chain runs to 627 residues: Pentatricopeptide repeat-containing protein At2g35030, mitochondrial (627 aa).

A mitochondrion-targeting transit peptide spans Met-1–Pro-44. PPR repeat units lie at residues Arg-45 to Arg-75, Asp-76 to Val-110, Thr-111 to Arg-138, Asn-139 to Ser-173, Trp-174 to Arg-200, Asp-201 to Ser-235, Trp-236 to Arg-262, Asp-263 to Lys-293, Asn-294 to Lys-328, Asn-330 to Ser-360, Asn-365 to Gln-396, Asp-398 to Pro-432, Ser-433 to Pro-467, and Arg-469 to Arg-499. Positions Phe-504–Gly-579 are type E motif. A type E(+) motif region spans residues Lys-580–Arg-610.

This sequence belongs to the PPR family. PCMP-E subfamily.

The protein localises to the mitochondrion. This chain is Pentatricopeptide repeat-containing protein At2g35030, mitochondrial (PCMP-E15), found in Arabidopsis thaliana (Mouse-ear cress).